The following is a 170-amino-acid chain: Large ribosomal subunit protein uL15 (170 aa).

Residues 1 to 12 show a composition bias toward basic and acidic residues; the sequence is MKLHDLRPAEGS. The tract at residues 1–50 is disordered; the sequence is MKLHDLRPAEGSHRKRKRIGRGHGSGKVKTGGKGMMGQKARSGPGPYRTF. Positions 13 to 26 are enriched in basic residues; the sequence is HRKRKRIGRGHGSG.

This sequence belongs to the universal ribosomal protein uL15 family. Part of the 50S ribosomal subunit.

Its function is as follows. Binds to the 23S rRNA. The sequence is that of Large ribosomal subunit protein uL15 from Chloroflexus aggregans (strain MD-66 / DSM 9485).